The primary structure comprises 305 residues: Ribonuclease BN (305 aa).

Zn(2+) contacts are provided by histidine 64, histidine 66, aspartate 68, histidine 69, histidine 141, aspartate 212, and histidine 270. Catalysis depends on aspartate 68, which acts as the Proton acceptor.

Belongs to the RNase Z family. RNase BN subfamily. In terms of assembly, homodimer. Zn(2+) is required as a cofactor.

Its function is as follows. Zinc phosphodiesterase, which has both exoribonuclease and endoribonuclease activities. The polypeptide is Ribonuclease BN (Salmonella paratyphi C (strain RKS4594)).